The chain runs to 315 residues: MASVKEGDYQALKEEIKKIMKQPGYDDGSAGPVLVRLAWHASGNFSLVEHNGGSNGAGMRFPPESVDPANAGLHYAISFLLPLQSANSWISHADLWTLAGVTAIEAMGGPQIPWEPGRLDYESEQAAVEHRGDVSNRLPDGALGAAHIRDVFGRMGFSDQEIVALSGAHNLGRCHADRSGFDGPWVVNPTRFSNQYFKLLLPGTRLMMLPTDMALIEDPSFRPWVEKYAADQNLFFKDFANAFGKLIELGVDRDDTGFARLAKKAAEEGKPLDKTAPPAGDETCPVSGAVGGGVQRAAGGGGCPFMAMQNREAKL.

His-40 serves as the catalytic Proton acceptor. Residue His-169 coordinates heme b. Trp-185 serves as the catalytic Tryptophan radical intermediate. The segment at 267-286 (EEGKPLDKTAPPAGDETCPV) is disordered.

This sequence belongs to the peroxidase family. Cytochrome c peroxidase subfamily. Heme b serves as cofactor.

Functionally, destroys radicals which are normally produced within the cells and which are toxic to biological systems. The protein is Putative heme-binding peroxidase of Cryptococcus neoformans var. neoformans serotype D (strain B-3501A) (Filobasidiella neoformans).